A 101-amino-acid polypeptide reads, in one-letter code: Small ribosomal subunit protein uS17 (101 aa).

Belongs to the universal ribosomal protein uS17 family. Part of the 30S ribosomal subunit.

Its function is as follows. One of the primary rRNA binding proteins, it binds specifically to the 5'-end of 16S ribosomal RNA. The sequence is that of Small ribosomal subunit protein uS17 from Koribacter versatilis (strain Ellin345).